Reading from the N-terminus, the 469-residue chain is Transcriptional coactivator YAP1 (469 aa).

Pro residues predominate over residues 1-21 (MEPAQQPPPQPAPQGPAPPSV). The segment at 1 to 47 (MEPAQQPPPQPAPQGPAPPSVSPAGTPAAPPAPPAGHQVVHVRGDSE) is disordered. Ser-46 is modified (phosphoserine). Thr-48 is modified (phosphothreonine). Residues 71-85 (MRLRKLPDSFFKPPE) adopt a coiled-coil conformation. Lys-75 carries the N6-lactoyllysine modification. Positions 76-99 (LPDSFFKPPEPKSHSRQASTDAGT) are disordered. Phosphoserine occurs at positions 90 and 94. Phosphothreonine is present on residues Thr-95 and Thr-104. Ser-112 carries the phosphoserine; by LATS1 and LATS2 modification. A phosphoserine mark is found at Ser-113 and Ser-116. Thr-136 is subject to Phosphothreonine; by MAPK8 and MAPK9. Position 146 is a phosphoserine; by LATS1 and LATS2 (Ser-146). WW domains lie at 153-186 (VPLPAGWEMAKTSSGQRYFLNHNDQTTTWQDPRK) and 212-245 (GPLPDGWEQAMTQDGEVYYINHKNKTTSWLDPRL). The tract at residues 258–290 (SAPVKQPPPLAPQSPQGGVLGGGSSNQQQQIQL) is disordered. 2 positions are modified to phosphoserine: Ser-271 and Ser-320. The segment at 273–469 (QGGVLGGGSS…LDKESFLTWL (197 aa)) is transactivation domain. The stretch at 280–325 (GSSNQQQQIQLQQLQMEKERLRLKQQELFRQELALRSQLPSLEQDG) forms a coiled coil. A Phosphoserine; by MAPK8 and MAPK9 modification is found at Ser-333. The segment covering 345–357 (TNSSDPFLNSGTY) has biased composition (polar residues). The tract at residues 345-405 (TNSSDPFLNS…SQSTLPSQQS (61 aa)) is disordered. 3 positions are modified to phosphoserine: Ser-347, Ser-348, and Ser-354. Ser-363 bears the Phosphoserine; by LATS1 and LATS2 mark. Positions 365–375 (DSGLSMSSYSI) are enriched in polar residues. Phosphoserine; by CK1 is present on residues Ser-366 and Ser-369. Tyr-373 is modified (phosphotyrosine; by ABL1). Position 378 is a phosphothreonine; by MAPK8 and MAPK9 (Thr-378). Over residues 393 to 405 (DTISQSTLPSQQS) the composition is skewed to polar residues.

The protein belongs to the YAP1 family. As to quaternary structure, part of a complex when phosphorylated that contains DSG3, PKP1, YAP1 and YWHAG; the complex is required for localization of DSG3 and YAP1 to the cell membrane in keratinocytes. Binds to the SH3 domain of the YES kinase. Binds to WBP1 and WBP2. Binds, in vitro, through the WW1 domain, to neural isoforms of ENAH that contain the PPSY motif. The phosphorylated form interacts with YWHAB. Interacts (via WW domains) with LATS1 (via PPxY motif 2). Interacts with LATS2. Interacts (via WW domain 1) with ERBB4 (via PPxY motif 2). Interacts with TEAD1, TEAD2, TEAD3 and TEAD4. Interacts with TP73. Interacts with RUNX1. Interacts with HCK. Interacts (via WW domains) with PTPN14 (via PPxY motif 2); this interaction leads to the cytoplasmic sequestration of YAP1 and inhibits its transcriptional coactivator activity. Interacts (when phosphorylated at Ser-112) with SMAD2, SMAD3 and WWTR1. Interacts with PRRG2 (via cytoplasmic domain). Interacts (via WW domains) with PRRG4 (via cytoplasmic domain). Interacts (phosphorylated) with CLDN18; the interaction sequesters YAP1 away from the nucleus and thereby restricts transcription of YAP1 target genes. Interacts with SMAD1. Interacts with AMOT; the interaction facilitates translocation of YAP1 to the cytoplasm and tight junctions. Interacts with AMOTL2, the interaction is required for ubiquitination of AMOTL2 and localization of YAP1 to tight junctions. Post-translationally, phosphorylated by LATS1 and LATS2; leading to cytoplasmic translocation and inactivation. Phosphorylated by ABL1; leading to YAP1 stabilization, enhanced interaction with TP73 and recruitment onto proapoptotic genes; in response to DNA damage. Phosphorylation at Ser-366 and Ser-369 by CK1 is triggered by previous phosphorylation at Ser-363 by LATS proteins and leads to YAP1 ubiquitination by SCF(beta-TRCP) E3 ubiquitin ligase and subsequent degradation. Phosphorylated at Thr-104, Thr-136, Ser-333 and Thr-378 by MAPK8/JNK1 and MAPK9/JNK2, which is required for the regulation of apoptosis by YAP1. In terms of processing, lactylation by AARS1 promotes nuclear localization and stabilization of YAP1, leading to increased Hippo signaling pathway. Delactylated by SIRT1. Ubiquitinated by SCF(beta-TRCP) E3 ubiquitin ligase. As to expression, highly specific to cortical neurons.

It localises to the cytoplasm. It is found in the nucleus. Its subcellular location is the cell junction. The protein resides in the tight junction. The protein localises to the cell membrane. Transcriptional regulator with dual roles as a coactivator and corepressor. Critical downstream regulatory target in the Hippo signaling pathway, crucial for organ size control and tumor suppression by restricting proliferation and promoting apoptosis. The Hippo signaling pathway core involves a kinase cascade featuring STK3/MST2 and STK4/MST1, along with its regulatory partner SAV1, which phosphorylates and activates LATS1/2 in complex with their regulatory protein, MOB1. This activation leads to the phosphorylation and inactivation of the YAP1 oncoprotein and WWTR1/TAZ. Phosphorylation of YAP1 by LATS1/2 prevents its nuclear translocation, thereby regulating the expression of its target genes. The transcriptional regulation of gene expression requires TEAD transcription factors and modulates cell growth, anchorage-independent growth, and induction of epithelial-mesenchymal transition (EMT). Plays a key role in tissue tension and 3D tissue shape by regulating the cortical actomyosin network, acting via ARHGAP18, a Rho GTPase activating protein that suppresses F-actin polymerization. It also suppresses ciliogenesis by acting as a transcriptional corepressor of TEAD4 target genes AURKA and PLK1. In conjunction with WWTR1, regulates TGFB1-dependent SMAD2 and SMAD3 nuclear accumulation. Synergizes with WBP2 to enhance PGR activity. In terms of biological role, attenuates p73-mediated cell death signaling in transcriptional repression-induced atypical death (TRIAD) of neurons. This chain is Transcriptional coactivator YAP1 (Yap1), found in Rattus norvegicus (Rat).